The chain runs to 131 residues: Cell cycle protein GpsB (131 aa).

Residues 39 to 76 (LDGIIRDYEAFTNEIDRLKEENTKLFSRVDELTKQLSV) adopt a coiled-coil conformation. The tract at residues 111-131 (KLSDSSVDNHDDGNHSDVDQY) is disordered. Over residues 117-131 (VDNHDDGNHSDVDQY) the composition is skewed to basic and acidic residues.

Belongs to the GpsB family. As to quaternary structure, forms polymers through the coiled coil domains. Interacts with PBP1, MreC and EzrA.

Its subcellular location is the cytoplasm. Functionally, divisome component that associates with the complex late in its assembly, after the Z-ring is formed, and is dependent on DivIC and PBP2B for its recruitment to the divisome. Together with EzrA, is a key component of the system that regulates PBP1 localization during cell cycle progression. Its main role could be the removal of PBP1 from the cell pole after pole maturation is completed. Also contributes to the recruitment of PBP1 to the division complex. Not essential for septum formation. The polypeptide is Cell cycle protein GpsB (Lacticaseibacillus casei (strain BL23) (Lactobacillus casei)).